The primary structure comprises 1377 residues: MAERADLVFHNKAIDGTAMKRLISRLIDHFGMAYTSHILDQIKTLGFQQATATSISLGIDDLLTIPSKGWLVQDAEQQSLILEKHHHYGNVHAVEKLRQSIEIWYATSEYLRQEMNPNFRMTDPSNPVHIMSFSGARGNASQVHQLVGMRGLMSDPQGQMIDLPIQSNLREGLSLTEYIISCYGARKGVVDTAVRTSDAGYLTRRLVEVVQHIVVRRTDCGTLRGSSVSPRNGTITERIFIQTLIGRVLADDIYIGSRCIAIRNQDIGIGLVNRFITFRAQPISIRTPFTCKSTSWICRLCYGRSPTHGDLVELGEAVGIIAGQSIGEPGTQLTLRTFHTGGVFTGGTAEHVRAPSNGKIKFKEDLVHPTRTRHGHPAFLCYIDLYVTIEGQDIRHNVTIPPKSFLLVQNDQYVESEQVIAEIRAGTSTLNFKERVRKHIYSDSEGEMHWSTAVYHAPEYTYGNVHLLPKTSHLWILSGGPYRSSIVSFSLHKDQDQMNVHSLSAEQKSISNLLVTNNQVRHKFLSSEPSGKKGERILDYSGPNRIICNGHCNFIYPAILHENSYLLAKRRRNRFIIPFQYNQEQEKELITRSGISIEIPINGIFRRNSILAYFDDPRYRRNSSGITKYGTIEAHSIVKKEDLIEYRKRPKYQTKIDRFFFIPEEVHILPGSSSVMVRNNSIIGVNTRITFKTRSRVGGLVRVEKKKKKIELKIFSGDIHFPGETDKISWHSGILIPPGTGKKNSKESKNFKNWIYVQRITPTKKKYFVLVRPVVTYEIADGINLATLFPQDPLQERDNVQLRVVNYILYGNGKPIRGISHTNIQLVRTCLVLNWDQEKNGSSMEEVHASFVEVRVNNLIRDFIRMDLVKSPISYTRKRNAPAGSELILANGSDYTNLNPFYSKARIQQSLTQHQGTIRTLLNRNKECQSLIFLSSSNCFRIGPFKGLKYNNMTKKSNKRDSLLLIRNSLGPLGIVPKIANFSSFYYLITHNQILINKYLLLDNLKQTFQKLKYYLMDENGRIYNPDPCSNMILNPFNWNWYFLHHDYCEETSTIISLGQFFCENVCISKYGPHLKSGQVIIVHVDSLVIRSAKPYLATPGATVHGHYGEILYKGDTLVTFIYEKSRSGDITQGLPKVEQVLEVRSIDSISMNLEKRVEGWNERITRILGIPWGFLIGAELTIAQSRVSLVNKIQKVYRSQGVQIHNRHIEIIVRQITSKVLVSEDGMSNVFSPGELIGLLRAERTGRALEEAICYRAVLLGITRASLNTQSFISEASFQETARVLAKAALRGRIDWLKGLKENVVLGGMIPVGTGFKGLVHRSSQHSNISLEIQNTNLFEGGMRDILFHHRELFYSCIPKNFHDTSEQKFTGFIDS.

Zn(2+) contacts are provided by C220, C291, C298, and C301.

Belongs to the RNA polymerase beta' chain family. RpoC2 subfamily. As to quaternary structure, in plastids the minimal PEP RNA polymerase catalytic core is composed of four subunits: alpha, beta, beta', and beta''. When a (nuclear-encoded) sigma factor is associated with the core the holoenzyme is formed, which can initiate transcription. Zn(2+) is required as a cofactor.

The protein resides in the plastid. It is found in the chloroplast. It catalyses the reaction RNA(n) + a ribonucleoside 5'-triphosphate = RNA(n+1) + diphosphate. In terms of biological role, DNA-dependent RNA polymerase catalyzes the transcription of DNA into RNA using the four ribonucleoside triphosphates as substrates. In Nandina domestica (Heavenly bamboo), this protein is DNA-directed RNA polymerase subunit beta''.